Here is a 404-residue protein sequence, read N- to C-terminus: Cysteine desulfurase IscS (404 aa).

Pyridoxal 5'-phosphate-binding positions include Ala75–Thr76, Asn155, Gln183, and Ser203–His205. At Lys206 the chain carries N6-(pyridoxal phosphate)lysine. Thr243 contacts pyridoxal 5'-phosphate. Cys328 (cysteine persulfide intermediate) is an active-site residue. Residue Cys328 participates in [2Fe-2S] cluster binding.

It belongs to the class-V pyridoxal-phosphate-dependent aminotransferase family. NifS/IscS subfamily. As to quaternary structure, homodimer. Forms a heterotetramer with IscU, interacts with other sulfur acceptors. Pyridoxal 5'-phosphate serves as cofactor.

The protein resides in the cytoplasm. It carries out the reaction (sulfur carrier)-H + L-cysteine = (sulfur carrier)-SH + L-alanine. The protein operates within cofactor biosynthesis; iron-sulfur cluster biosynthesis. Master enzyme that delivers sulfur to a number of partners involved in Fe-S cluster assembly, tRNA modification or cofactor biosynthesis. Catalyzes the removal of elemental sulfur atoms from cysteine to produce alanine. Functions as a sulfur delivery protein for Fe-S cluster synthesis onto IscU, an Fe-S scaffold assembly protein, as well as other S acceptor proteins. This is Cysteine desulfurase IscS from Tolumonas auensis (strain DSM 9187 / NBRC 110442 / TA 4).